The sequence spans 392 residues: Cell division protein FtsZ (392 aa).

Residues 24 to 28 (GGGCN), 111 to 113 (GTG), Glu-142, Arg-145, and Asp-189 each bind GTP.

The protein belongs to the FtsZ family. As to quaternary structure, homodimer. Polymerizes to form a dynamic ring structure in a strictly GTP-dependent manner. Interacts directly with several other division proteins.

It is found in the cytoplasm. Essential cell division protein that forms a contractile ring structure (Z ring) at the future cell division site. The regulation of the ring assembly controls the timing and the location of cell division. One of the functions of the FtsZ ring is to recruit other cell division proteins to the septum to produce a new cell wall between the dividing cells. Binds GTP and shows GTPase activity. The polypeptide is Cell division protein FtsZ (Neisseria gonorrhoeae).